We begin with the raw amino-acid sequence, 577 residues long: MNIQALLSEKVRQAMIAAGAPADCEPQVRQSAKVQFGDYQANGMMAVAKKLGMAPRQLAEQVLTHLDLNGIASKVEIAGPGFINIFLDPAFLAEHVQQALASDRLGVATPEKQTIVVDYSAPNVAKEMHVGHLRSTIIGDAAVRTLEFLGHKVIRANHVGDWGTQFGMLIAWLEKQQQENAGEMELADLEGFYRDAKKHYDEDEEFAERARNYVVKLQSGDEYFREMWRKLVDITMTQNQITYDRLNVTLTRDDVMGESLYNPMLPGIVADLKAKGLAVESEGASVVFLDEFKNKEGEPMGVIIQKKDGGYLYTTTDIACAKYRYETLHADRVLYYIDSRQHQHLMQAWAIVRKAGYVPESVPLEHHMFGMMLGKDGKPFKTRAGGTVKLADLLDEALERARRLVAEKNPDMPADELEKLANAVGIGAVKYADLSKNRTTDYIFDWDNMLAFEGNTAPYMQYAYTRVLSVFRKAEINEEQLAAAPVIIREDREAQLAARLLQFEETLTVVAREGTPHVMCAYLYDLAGLFSGFYEHCPILSAESEEVRNSRLKLAQLTAKTLKLGLDTLGIETVERM.

The 'HIGH' region motif lies at 122-132 (PNVAKEMHVGH).

It belongs to the class-I aminoacyl-tRNA synthetase family. In terms of assembly, monomer.

Its subcellular location is the cytoplasm. The enzyme catalyses tRNA(Arg) + L-arginine + ATP = L-arginyl-tRNA(Arg) + AMP + diphosphate. The chain is Arginine--tRNA ligase from Escherichia coli O127:H6 (strain E2348/69 / EPEC).